The chain runs to 542 residues: CTP synthase (542 aa).

The tract at residues 1–265 is amidoligase domain; it reads MARYVFITGG…DDEVLAAFGI (265 aa). Ser13 lines the CTP pocket. Position 13 (Ser13) interacts with UTP. ATP contacts are provided by residues 14-19 and Asp71; that span reads SLGKGI. Residues Asp71 and Glu139 each contribute to the Mg(2+) site. Residues 146–148, 186–191, and Lys222 contribute to the CTP site; these read DIE and KTKPTQ. UTP-binding positions include 186–191 and Lys222; that span reads KTKPTQ. One can recognise a Glutamine amidotransferase type-1 domain in the interval 291 to 541; sequence TIAIVGKYTG…IEAATEQSRL (251 aa). Gly353 provides a ligand contact to L-glutamine. Cys380 functions as the Nucleophile; for glutamine hydrolysis in the catalytic mechanism. L-glutamine contacts are provided by residues 381 to 384, Glu404, and Arg469; that span reads FGMQ. Catalysis depends on residues His514 and Glu516.

Belongs to the CTP synthase family. As to quaternary structure, homotetramer.

It catalyses the reaction UTP + L-glutamine + ATP + H2O = CTP + L-glutamate + ADP + phosphate + 2 H(+). The catalysed reaction is L-glutamine + H2O = L-glutamate + NH4(+). The enzyme catalyses UTP + NH4(+) + ATP = CTP + ADP + phosphate + 2 H(+). Its pathway is pyrimidine metabolism; CTP biosynthesis via de novo pathway; CTP from UDP: step 2/2. Allosterically activated by GTP, when glutamine is the substrate; GTP has no effect on the reaction when ammonia is the substrate. The allosteric effector GTP functions by stabilizing the protein conformation that binds the tetrahedral intermediate(s) formed during glutamine hydrolysis. Inhibited by the product CTP, via allosteric rather than competitive inhibition. In terms of biological role, catalyzes the ATP-dependent amination of UTP to CTP with either L-glutamine or ammonia as the source of nitrogen. Regulates intracellular CTP levels through interactions with the four ribonucleotide triphosphates. In Rhizobium etli (strain CIAT 652), this protein is CTP synthase.